Here is a 510-residue protein sequence, read N- to C-terminus: Protein phosphatase 1H (510 aa).

A PPM-type phosphatase domain is found at 73–503; it reads STGYAEVINA…DDISVYVIPL (431 aa). Disordered stretches follow at residues 105-128 and 188-225; these read VQST…EGLQ and LGEE…PTRF.

The protein belongs to the PP2C family.

It localises to the nucleus. It is found in the cytoplasm. The enzyme catalyses O-phospho-L-seryl-[protein] + H2O = L-seryl-[protein] + phosphate. The catalysed reaction is O-phospho-L-threonyl-[protein] + H2O = L-threonyl-[protein] + phosphate. This Xenopus tropicalis (Western clawed frog) protein is Protein phosphatase 1H (ppm1h).